A 652-amino-acid chain; its full sequence is ATP-dependent RNA helicase DDX51 (652 aa).

Residues 1 to 145 form a disordered region; sequence MALFTINRYL…KAEKAEELTS (145 aa). Residues 25–34 are compositionally biased toward low complexity; sequence KALLAKLQKQ. Basic and acidic residues-rich tracts occupy residues 66 to 77 and 107 to 122; these read LQETKGKIKKSE and VIVK…EKSV. The Q motif motif lies at 212–220; that stretch reads FFPVQAEVI. Positions 234-442 constitute a Helicase ATP-binding domain; the sequence is GPGGYRPRDV…LLDLHQPRLF (209 aa). Residue 247–254 participates in ATP binding; sequence APTGSGKT. The DEAD box motif lies at 362–365; it reads DEAD. The region spanning 480–626 is the Helicase C-terminal domain; that stretch reads IILHFLLRLK…KQHVHPEALK (147 aa).

This sequence belongs to the DEAD box helicase family. DDX51/DBP6 subfamily.

It is found in the nucleus. The protein resides in the nucleolus. It carries out the reaction ATP + H2O = ADP + phosphate + H(+). ATP-binding RNA helicase involved in the biogenesis of 60S ribosomal subunits. The polypeptide is ATP-dependent RNA helicase DDX51 (ddx51) (Danio rerio (Zebrafish)).